A 569-amino-acid polypeptide reads, in one-letter code: 5'-AMP-activated protein kinase subunit gamma-2 (569 aa).

Residues 1-222 form a disordered region; that stretch reads MGSAVMDTKK…TRPPLASPTH (222 aa). Phosphoserine occurs at positions 65, 71, 73, 90, 138, 143, 161, and 162. Low complexity predominate over residues 156-167; that stretch reads TSGLSSSPSTPT. The residue at position 165 (threonine 165) is a Phosphothreonine. Positions 179–189 are enriched in basic and acidic residues; it reads SYKHEPERLEN. Residues 192-212 show a composition bias toward polar residues; that stretch reads YASSSPPDTGQRFCPSSFQSP. Residue serine 196 is modified to Phosphoserine. CBS domains lie at 275–335, 357–415, and 430–492; these read PTSS…KSPM, TFKP…MSDM, and IGTY…NLDI. Residues arginine 302, 317-322, valine 362, 383-384, and lysine 402 contribute to the ADP site; these read MLTITD and HR. AMP contacts are provided by residues arginine 302, 317 to 322, valine 362, histidine 383, 383 to 384, lysine 402, threonine 432, alanine 437, 458 to 459, 474 to 477, arginine 501, histidine 530, 530 to 531, and 546 to 549; these read MLTITD, HR, SA, SKFD, and SLSD. ATP-binding positions include arginine 302, 317 to 322, valine 362, 383 to 384, arginine 384, and lysine 402; these read MLTITD and HR. An AMPK pseudosubstrate motif is present at residues 370 to 391; it reads LFDAVYSLIKNKIHRLPVIDPI. Residues 474 to 477, arginine 501, and 530 to 531 each bind ADP; these read SKFD and HR. ATP-binding positions include 474–477, arginine 501, and 530–531; these read SKFD and HR. One can recognise a CBS 4 domain in the interval 504-562; sequence YFEGVVKCNKLEILETIVDRIVRAEVHRLVVVNEADSIVGIISLSDILQALILTPAGAK.

Belongs to the 5'-AMP-activated protein kinase gamma subunit family. AMPK is a heterotrimer of an alpha catalytic subunit (PRKAA1 or PRKAA2), a beta (PRKAB1 or PRKAB2) and a gamma non-catalytic subunits (PRKAG1, PRKAG2 or PRKAG3). Interacts with FNIP1 and FNIP2. Post-translationally, phosphorylated by ULK1; leading to negatively regulate AMPK activity and suggesting the existence of a regulatory feedback loop between ULK1 and AMPK. In terms of processing, glycosylated; O-GlcNAcylated by OGT, promoting the AMP-activated protein kinase (AMPK) activity. In terms of tissue distribution, isoform B is ubiquitously expressed except in liver and thymus. The highest level is detected in heart with abundant expression in placenta and testis.

In terms of biological role, AMP/ATP-binding subunit of AMP-activated protein kinase (AMPK), an energy sensor protein kinase that plays a key role in regulating cellular energy metabolism. In response to reduction of intracellular ATP levels, AMPK activates energy-producing pathways and inhibits energy-consuming processes: inhibits protein, carbohydrate and lipid biosynthesis, as well as cell growth and proliferation. AMPK acts via direct phosphorylation of metabolic enzymes, and by longer-term effects via phosphorylation of transcription regulators. Also acts as a regulator of cellular polarity by remodeling the actin cytoskeleton; probably by indirectly activating myosin. Gamma non-catalytic subunit mediates binding to AMP, ADP and ATP, leading to activate or inhibit AMPK: AMP-binding results in allosteric activation of alpha catalytic subunit (PRKAA1 or PRKAA2) both by inducing phosphorylation and preventing dephosphorylation of catalytic subunits. ADP also stimulates phosphorylation, without stimulating already phosphorylated catalytic subunit. ATP promotes dephosphorylation of catalytic subunit, rendering the AMPK enzyme inactive. The sequence is that of 5'-AMP-activated protein kinase subunit gamma-2 (PRKAG2) from Homo sapiens (Human).